We begin with the raw amino-acid sequence, 753 residues long: Striatin-4 (753 aa).

The segment at 10–65 is disordered; that stretch reads VAAAASSCRPLGSGAGPGPTGAAPVSAPAPGPGPAGKGGGGGGSPGPTAGPEPLSL. The segment covering 43–54 has biased composition (gly residues); the sequence is PAGKGGGGGGSP. At Ser-53 the chain carries Phosphoserine. The stretch at 69 to 136 forms a coiled coil; the sequence is LHFIQHEWAR…QERAKYHKLK (68 aa). The caveolin-binding stretch occupies residues 71–79; the sequence is FIQHEWARF. The calmodulin-binding stretch occupies residues 165–182; sequence ENSPLVWKEGRQLLRQYL. Phosphoserine is present on Ser-206. Disordered stretches follow at residues 213 to 232, 271 to 345, and 363 to 382; these read VEPSEGAPRAPPGPAGLSGG, CEDE…SPHE, and VDGLPPKVTGPPPGTPQPRP. Acidic residues-rich tracts occupy residues 271-283 and 302-317; these read CEDEDSDEDDELD and EMEDEDEEDDSEDAIN. Ser-276 carries the phosphoserine modification. Residues 332 to 345 are compositionally biased toward basic and acidic residues; sequence PDPRRCTVDGSPHE. Positions 370–380 are enriched in pro residues; it reads VTGPPPGTPQP. WD repeat units follow at residues 436 to 475, 489 to 528, 542 to 581, 587 to 628, 635 to 674, 677 to 716, and 723 to 753; these read SHYDGIRSLAFHHSQSALLTASEDGTLKLWNLQKAVTAKK, AHRGPVLAVAMGSNSEYCYSGGADACIHSWKIPDLSMDPY, GHGDAVWGLAFSPTSQRLASCSADGTVRIWDPSSSSPACL, ASEH…ALLT, SGPTQINQVVSHPNQPLTITAHDDRGIRFLDNRTGKPVHS, AHLDAVTCLAVDPNGAFLMSGSHDCSLRLWSLDNKTCVQE, and KHEEAIHAVACHPSKALIASAGADALAKVFV.

The protein belongs to the WD repeat striatin family. As to quaternary structure, part of the core of STRIPAK complexes composed of PP2A catalytic and scaffolding subunits, the striatins (PP2A regulatory subunits), the striatin-associated proteins MOB4, STRIP1 and STRIP2, PDCD10 and members of the STE20 kinases, such as STK24 and STK26. Interacts with CTTNBP2NL.

It localises to the cytoplasm. In terms of biological role, calmodulin-binding scaffolding protein which is the center of the striatin-interacting phosphatase and kinase (STRIPAK) complexes. STRIPAK complexes have critical roles in protein (de)phosphorylation and are regulators of multiple signaling pathways including Hippo, MAPK, nuclear receptor and cytoskeleton remodeling. Different types of STRIPAK complexes are involved in a variety of biological processes such as cell growth, differentiation, apoptosis, metabolism and immune regulation. Key regulator of the expanded Hippo signaling pathway by interacting and allowing the inhibition of MAP4K kinases by the STRIPAK complex. In Homo sapiens (Human), this protein is Striatin-4.